Consider the following 402-residue polypeptide: Mannonate dehydratase 1 (402 aa).

Belongs to the mannonate dehydratase family. The cofactor is Fe(2+). Mn(2+) serves as cofactor.

The catalysed reaction is D-mannonate = 2-dehydro-3-deoxy-D-gluconate + H2O. Its pathway is carbohydrate metabolism; pentose and glucuronate interconversion. Catalyzes the dehydration of D-mannonate. The chain is Mannonate dehydratase 1 (uxuA1) from Agrobacterium fabrum (strain C58 / ATCC 33970) (Agrobacterium tumefaciens (strain C58)).